A 488-amino-acid chain; its full sequence is Cardiolipin synthase 2 (488 aa).

2 helical membrane-spanning segments follow: residues 8–28 and 39–59; these read IIIN…AFII and IWAW…LYLL. PLD phosphodiesterase domains lie at 223–250 and 401–428; these read MNNR…GDEY and DNGF…DNRS. Catalysis depends on residues His228, Lys230, Asp235, His406, Lys408, and Asp413.

This sequence belongs to the phospholipase D family. Cardiolipin synthase subfamily.

The protein localises to the cell membrane. The enzyme catalyses 2 a 1,2-diacyl-sn-glycero-3-phospho-(1'-sn-glycerol) = a cardiolipin + glycerol. Its function is as follows. Catalyzes the reversible phosphatidyl group transfer from one phosphatidylglycerol molecule to another to form cardiolipin (CL) (diphosphatidylglycerol) and glycerol. The sequence is that of Cardiolipin synthase 2 (cls2) from Staphylococcus epidermidis (strain ATCC 35984 / DSM 28319 / BCRC 17069 / CCUG 31568 / BM 3577 / RP62A).